The chain runs to 412 residues: tRNA (guanine-N(7)-)-methyltransferase non-catalytic subunit WDR4 (412 aa).

Ala-2 bears the N-acetylalanine mark. 7 WD repeats span residues 3 to 40 (GSVG…IYDC), 50 to 90 (NKGE…LFRT), 94 to 131 (QCLS…SFSV), 137 to 174 (CGRL…VSWA), 180 to 218 (IESF…LWEY), 230 to 273 (ASLQ…IFQL), and 319 to 373 (PVGD…SYLK). Residues 377 to 412 (ERLQQQLEKKQRRRSPPPGPDGHAKKMRPGEATLSC) are disordered. A phosphoserine mark is found at Ser-391 and Ser-411.

The protein belongs to the WD repeat TRM82 family. As to quaternary structure, non-catalytic component of the METTL1-WDR4 complex, composed of METTL1 and WDR4. Interacts with FEN1; the interaction is direct.

The protein localises to the nucleus. It is found in the chromosome. It functions in the pathway tRNA modification; N(7)-methylguanine-tRNA biosynthesis. Its function is as follows. Non-catalytic component of the METTL1-WDR4 methyltransferase complex required for the formation of N(7)-methylguanine in a subset of RNA species, such as tRNAs, mRNAs and microRNAs (miRNAs). In the METTL1-WDR4 methyltransferase complex, WDR4 acts as a scaffold for tRNA-binding. Required for the formation of N(7)-methylguanine at position 46 (m7G46) in a large subset of tRNAs that contain the 5'-RAGGU-3' motif within the variable loop. M7G46 interacts with C13-G22 in the D-loop to stabilize tRNA tertiary structure and protect tRNAs from decay. Also required for the formation of N(7)-methylguanine at internal sites in a subset of mRNAs. Also required for methylation of a specific subset of miRNAs, such as let-7. Independently of METTL1, also plays a role in genome stability: localizes at the DNA replication site and regulates endonucleolytic activities of FEN1. The polypeptide is tRNA (guanine-N(7)-)-methyltransferase non-catalytic subunit WDR4 (Homo sapiens (Human)).